The primary structure comprises 129 residues: uncharacterized protein (129 aa).

An N-terminal signal peptide occupies residues 1–27 (MLMRKKKLLSRISFGSLFLLCGTILSA). C28 carries the N-palmitoyl cysteine lipid modification. C28 is lipidated: S-diacylglycerol cysteine.

It belongs to the MG439/MG440 family.

The protein localises to the cell membrane. This is an uncharacterized protein from Mycoplasma pneumoniae (strain ATCC 29342 / M129 / Subtype 1) (Mycoplasmoides pneumoniae).